The sequence spans 82 residues: Acyl carrier protein (82 aa).

A Carrier domain is found at 3–81 (SSEQEILAGL…DAVTYIAGAQ (79 aa)). S41 bears the O-(pantetheine 4'-phosphoryl)serine mark.

Belongs to the acyl carrier protein (ACP) family. In terms of processing, 4'-phosphopantetheine is transferred from CoA to a specific serine of apo-ACP by AcpS. This modification is essential for activity because fatty acids are bound in thioester linkage to the sulfhydryl of the prosthetic group.

It is found in the cytoplasm. It participates in lipid metabolism; fatty acid biosynthesis. Functionally, carrier of the growing fatty acid chain in fatty acid biosynthesis. This is Acyl carrier protein from Beutenbergia cavernae (strain ATCC BAA-8 / DSM 12333 / CCUG 43141 / JCM 11478 / NBRC 16432 / NCIMB 13614 / HKI 0122).